The sequence spans 194 residues: Xanthine phosphoribosyltransferase (194 aa).

Xanthine is bound by residues leucine 20 and asparagine 27. 128 to 132 serves as a coordination point for 5-phospho-alpha-D-ribose 1-diphosphate; sequence ANGCA. Lysine 156 serves as a coordination point for xanthine.

It belongs to the purine/pyrimidine phosphoribosyltransferase family. Xpt subfamily. Homodimer.

The protein localises to the cytoplasm. It carries out the reaction XMP + diphosphate = xanthine + 5-phospho-alpha-D-ribose 1-diphosphate. It functions in the pathway purine metabolism; XMP biosynthesis via salvage pathway; XMP from xanthine: step 1/1. Functionally, converts the preformed base xanthine, a product of nucleic acid breakdown, to xanthosine 5'-monophosphate (XMP), so it can be reused for RNA or DNA synthesis. This is Xanthine phosphoribosyltransferase from Lachnoclostridium phytofermentans (strain ATCC 700394 / DSM 18823 / ISDg) (Clostridium phytofermentans).